The following is a 565-amino-acid chain: Galactoside 2-alpha-L-fucosyltransferase (565 aa).

The Cytoplasmic segment spans residues 1 to 43; the sequence is MNMLIKRVIAIKNPRGDDNNNNKLSDLETLTDKCTTCPLTLMR. The helical; Signal-anchor for type II membrane protein transmembrane segment at 44–64 threads the bilayer; sequence VMAFFVVSFMLFSVLFSLSVV. Topologically, residues 65 to 565 are lumenal; the sequence is LRDPPSDAAI…MSWGLKLVDN (501 aa). N-linked (GlcNAc...) asparagine glycans are attached at residues N159, N263, N407, and N509.

This sequence belongs to the glycosyltransferase 37 family.

The protein localises to the golgi apparatus. It localises to the golgi stack membrane. It participates in protein modification; protein glycosylation. Involved in cell wall biosynthesis. Adds the terminal fucosyl residue on xyloglucan side chains. The protein is Galactoside 2-alpha-L-fucosyltransferase (FT1) of Pisum sativum (Garden pea).